Reading from the N-terminus, the 455-residue chain is Mu-like prophage FluMu DNA circularization protein (455 aa).

Positions 368 to 387 (VILDNADAEQWTSYAALEQY) form a DNA-binding region, H-T-H motif.

The protein to phage Mu protein N.

In Haemophilus influenzae (strain ATCC 51907 / DSM 11121 / KW20 / Rd), this protein is Mu-like prophage FluMu DNA circularization protein.